A 130-amino-acid polypeptide reads, in one-letter code: MSDIMYRGLGRRKSSSARVILRPGKGEFLINKRVARDYLMSDILLKDALQPIVISDQKEKFDITVNVRGGGLSGQAGAIRLGIARALLEVSVDFRKNLKTAGMLTRDARVKERKKPGLKKARKARQFSKR.

Residues 109-130 (RVKERKKPGLKKARKARQFSKR) form a disordered region. The span at 111 to 130 (KERKKPGLKKARKARQFSKR) shows a compositional bias: basic residues.

This sequence belongs to the universal ribosomal protein uS9 family.

The sequence is that of Small ribosomal subunit protein uS9 from Mycoplasma mobile (strain ATCC 43663 / 163K / NCTC 11711) (Mesomycoplasma mobile).